Here is a 505-residue protein sequence, read N- to C-terminus: Beta-agarase (505 aa).

Positions 1-23 (MLKVIPWLLVTSSLVAIPTYIHA) are cleaved as a signal peptide. The active-site Proton donor is the E200. E322 acts as the Nucleophile in catalysis.

This sequence belongs to the glycosyl hydrolase 86 family.

The protein localises to the secreted. The catalysed reaction is Hydrolysis of (1-&gt;4)-beta-D-galactosidic linkages in agarose, giving the tetramer as the predominant product.. Hydrolase that cleaves agar at the (1-&gt;4) linkage, producing tetrameric saccharide molecules. Is specific for agar and agarose and does not digest alginate or carrageenan. The sequence is that of Beta-agarase from Pseudoalteromonas atlantica (Alteromonas atlantica).